We begin with the raw amino-acid sequence, 134 residues long: UPF0102 protein Rmet_3430 (134 aa).

This sequence belongs to the UPF0102 family.

This Cupriavidus metallidurans (strain ATCC 43123 / DSM 2839 / NBRC 102507 / CH34) (Ralstonia metallidurans) protein is UPF0102 protein Rmet_3430.